Reading from the N-terminus, the 446-residue chain is Glucose transporter GlcP (446 aa).

At 1–6 the chain is on the cytoplasmic side; sequence MKANKY. A helical transmembrane segment spans residues 7–31; it reads LIFILGALGGLLYGYDNGVISGALL. At 32 to 38 the chain is on the extracellular side; the sequence is FIHKDIP. Residues 39 to 64 traverse the membrane as a helical segment; that stretch reads LNSTTEGIVVSSMLIGAIVGAGSSGP. The Cytoplasmic portion of the chain corresponds to 65–70; the sequence is LADKLG. A helical transmembrane segment spans residues 71–90; that stretch reads RRRLVMLIAIVFIIGALILA. Residues 91–94 lie on the Extracellular side of the membrane; that stretch reads ASTN. Residues 95–122 form a helical membrane-spanning segment; that stretch reads LALLIIGRLIIGLAVGGSMSTVPVYLSE. The Cytoplasmic portion of the chain corresponds to 123 to 129; that stretch reads MAPTEYR. A helical transmembrane segment spans residues 130–152; it reads GSLGSLNQLMITIGILAAYLVNY. The Extracellular segment spans residues 153-154; it reads AF. The chain crosses the membrane as a helical span at residues 155-180; that stretch reads ADIEGWRWMLGLAVVPSVILLVGIYF. Topologically, residues 181-234 are cytoplasmic; sequence MPESPRWLLENRNEEAARQVMKITYDDSEIDKELKEMKEINAISESTWTVIKSP. Residues 235–269 traverse the membrane as a helical segment; that stretch reads WLGRILIVGCIFAIFQQFIGINAVIFYSSSIFAKA. The Extracellular segment spans residues 270–272; the sequence is GLG. Residues 273-295 form a helical membrane-spanning segment; it reads EAASILGSVGIGTINVLVTIVAI. At 296–303 the chain is on the cytoplasmic side; the sequence is FVVDKIDR. The helical transmembrane segment at 304–324 threads the bilayer; the sequence is KKLLVGGNIGMIASLLIMAIL. Residues 325–329 are Extracellular-facing; it reads IWTIG. Residues 330 to 363 form a helical membrane-spanning segment; it reads IASSAWIIIVCLSLFIVFFGISWGPVLWVMLPEL. The Cytoplasmic portion of the chain corresponds to 364 to 370; that stretch reads FPMRARG. Residues 371–399 form a helical membrane-spanning segment; the sequence is AATGISALVLNIGTLIVSLFFPILSDALS. Over 400 to 401 the chain is Extracellular; that stretch reads TE. The helical transmembrane segment at 402-420 threads the bilayer; it reads WVFLIFAFIGVLAMIFVIK. Residues 421-446 lie on the Cytoplasmic side of the membrane; it reads FLPETRGRSLEEIEYELRERTGARTE.

This sequence belongs to the major facilitator superfamily. Sugar transporter (TC 2.A.1.1) family.

It is found in the cell membrane. Inhibited by carbonyl cyanide m-chlorophenylhydrazone (CCCP) and by the human glucose transport inhibitors cytochalasin B, phloretin, and forskolin. Functionally, transporter highly specific for glucose uptake. The chain is Glucose transporter GlcP from Staphylococcus epidermidis (strain ATCC 12228 / FDA PCI 1200).